We begin with the raw amino-acid sequence, 334 residues long: MHSKVVIIGSGPAAHTAAIYLARAELKPVLYEGFMANGIAAGGQLTTTTEIENFPGFPDGIMGQELMDKMKAQSERFGTQIISETVAKVDLSARPFKYATEWSPEEYHTADSIILATGASARRLHLPGEEKYWQNGISACAVCDGAVPIFRNKHLVVIGGGDSAAEEAMYLTKYGSHVTVLVRKDKLRASSIMAHRLLNHEKVTVRFNTVGVEVKGDDKGLMSHLVVKDVTTGKEETLEANGLFYAIGHDPATALVKGQLETDADGYVVTKPGTTLTSVEGVFAAGDVQDKRYRQAITSAGTGCMAALDAEKFLSEHEETPAEHRDTSAVQGNL.

Residues 10–13, 39–40, Gln-44, Asn-53, Val-86, Cys-143, Asp-287, and 294–296 each bind FAD; these read SGPA, IA, and RQA. Cys-140 and Cys-143 are oxidised to a cystine.

Belongs to the class-II pyridine nucleotide-disulfide oxidoreductase family. As to quaternary structure, homodimer. It depends on FAD as a cofactor.

It localises to the cytoplasm. It catalyses the reaction [thioredoxin]-dithiol + NADP(+) = [thioredoxin]-disulfide + NADPH + H(+). This Neurospora crassa (strain ATCC 24698 / 74-OR23-1A / CBS 708.71 / DSM 1257 / FGSC 987) protein is Thioredoxin reductase (cys-9).